Consider the following 201-residue polypeptide: MPTAVTGPEIERLIQLLARLPGLGPRSARRAALHLIKKREALMAPLASALQVAIDRIRVCETCGNIDTRSPCTICTDARRDPSIIVVVADVADLWALERAGATNGFYHVLGATLSPLDGVGPQDLTIDALVARAHDPRVAEIVLALNATVDGQTTAHYITDLLGEANVKVTRLAHGVPVGGELDYLDEGTLSAAMRQRTLF.

The segment at Cys60–Cys75 adopts a C4-type zinc-finger fold. The Toprim domain maps to Ser83 to Pro178.

It belongs to the RecR family.

Its function is as follows. May play a role in DNA repair. It seems to be involved in an RecBC-independent recombinational process of DNA repair. It may act with RecF and RecO. The protein is Recombination protein RecR of Nitrobacter winogradskyi (strain ATCC 25391 / DSM 10237 / CIP 104748 / NCIMB 11846 / Nb-255).